The sequence spans 504 residues: ATP synthase subunit alpha (504 aa).

169–176 lines the ATP pocket; it reads GDRQTGKT.

Belongs to the ATPase alpha/beta chains family. As to quaternary structure, F-type ATPases have 2 components, CF(1) - the catalytic core - and CF(0) - the membrane proton channel. CF(1) has five subunits: alpha(3), beta(3), gamma(1), delta(1), epsilon(1). CF(0) has three main subunits: a(1), b(2) and c(9-12). The alpha and beta chains form an alternating ring which encloses part of the gamma chain. CF(1) is attached to CF(0) by a central stalk formed by the gamma and epsilon chains, while a peripheral stalk is formed by the delta and b chains.

It localises to the cell membrane. The catalysed reaction is ATP + H2O + 4 H(+)(in) = ADP + phosphate + 5 H(+)(out). In terms of biological role, produces ATP from ADP in the presence of a proton gradient across the membrane. The alpha chain is a regulatory subunit. This is ATP synthase subunit alpha from Clostridium botulinum (strain Langeland / NCTC 10281 / Type F).